A 399-amino-acid chain; its full sequence is MDTHAFKRSLHHSERYNRRGFGRAEEVAESLEQAYQSGLIGTIRDNGYKLSHGRLTVRLAEAFGFCWGVERAVAMAYETRKHYPAERLWITNEIIHNPSVNDHLREMDVQFIPVEQGVKDFSGVTSGDVVILPAFGATVQEMQLLNERGCHIVDTTCPWVSKVWTTVEKHKKHTITSIIHGKVKHEETLATSSFAGTYLVVLDMEEAQIVADYILGKGDRDAFMQRFSAACSPGFDPDRDLSRLGVANQTTMLKSETEEIGRLFERTMLSKYGPAELNDHFVAFNTICDATQERQDAMFSLVDEPLDLMVVIGGFNSSNTTHLQEIALSRGIRSFHIDTPDRLDAQANAIEHKPLNENLRLESNFLPAGPVTVGITSGASTPDRAVEEVIEKLMLLSES.

Cys-66 is a binding site for [4Fe-4S] cluster. His-96 is a binding site for (2E)-4-hydroxy-3-methylbut-2-enyl diphosphate. A dimethylallyl diphosphate-binding site is contributed by His-96. Position 96 (His-96) interacts with isopentenyl diphosphate. Residue Cys-157 coordinates [4Fe-4S] cluster. His-185 is a binding site for (2E)-4-hydroxy-3-methylbut-2-enyl diphosphate. His-185 lines the dimethylallyl diphosphate pocket. His-185 is a binding site for isopentenyl diphosphate. The active-site Proton donor is Glu-187. (2E)-4-hydroxy-3-methylbut-2-enyl diphosphate is bound at residue Thr-250. Cys-288 contributes to the [4Fe-4S] cluster binding site. Residues Ser-317, Ser-318, Asn-319, and Ser-380 each contribute to the (2E)-4-hydroxy-3-methylbut-2-enyl diphosphate site. 4 residues coordinate dimethylallyl diphosphate: Ser-317, Ser-318, Asn-319, and Ser-380. Residues Ser-317, Ser-318, Asn-319, and Ser-380 each contribute to the isopentenyl diphosphate site.

Belongs to the IspH family. [4Fe-4S] cluster serves as cofactor.

It carries out the reaction isopentenyl diphosphate + 2 oxidized [2Fe-2S]-[ferredoxin] + H2O = (2E)-4-hydroxy-3-methylbut-2-enyl diphosphate + 2 reduced [2Fe-2S]-[ferredoxin] + 2 H(+). The catalysed reaction is dimethylallyl diphosphate + 2 oxidized [2Fe-2S]-[ferredoxin] + H2O = (2E)-4-hydroxy-3-methylbut-2-enyl diphosphate + 2 reduced [2Fe-2S]-[ferredoxin] + 2 H(+). It participates in isoprenoid biosynthesis; dimethylallyl diphosphate biosynthesis; dimethylallyl diphosphate from (2E)-4-hydroxy-3-methylbutenyl diphosphate: step 1/1. It functions in the pathway isoprenoid biosynthesis; isopentenyl diphosphate biosynthesis via DXP pathway; isopentenyl diphosphate from 1-deoxy-D-xylulose 5-phosphate: step 6/6. Functionally, catalyzes the conversion of 1-hydroxy-2-methyl-2-(E)-butenyl 4-diphosphate (HMBPP) into a mixture of isopentenyl diphosphate (IPP) and dimethylallyl diphosphate (DMAPP). Acts in the terminal step of the DOXP/MEP pathway for isoprenoid precursor biosynthesis. The polypeptide is 4-hydroxy-3-methylbut-2-enyl diphosphate reductase (Parasynechococcus marenigrum (strain WH8102)).